We begin with the raw amino-acid sequence, 434 residues long: MSEHASQSTLNRFFHAPLKEVDAEVATILNEELTRQQDGIELIASENMASFAVMEAQGSVLTNKYAEGLPGKRYYGGCVDVDRVENLAIDRLKKIFGAEFANVQPHSGANANQAAFMALAKPGDTVLGLSLAAGGHLTHGAAPNYSGKWFNSVQYGVRAEDGLIDYDQMEALAREHKPKIIVAGSSAYPRVIDFARFRKIADEVGAYLMVDMAHFAGLVAAGLYPNPVPMADITTSTTHKTLRGPRGGIILTNNPDLAKKVNSAVFPGLQGGPLMHVIAGKAVAFGEALSDEFKAYQKRVLANARALADELQNRGFDIVTGGTDSHLILVDLRPKKVTGKLAEAILERAGITANKNAIPFDPEKPFVTSGIRLGSPAATARGFGEAEFREVGRMIDEVLTAALEEDNAEAVTARVHEEVKALCRRFPIYDRASA.

(6S)-5,6,7,8-tetrahydrofolate-binding positions include L131 and 135–137; that span reads GHL. K240 is subject to N6-(pyridoxal phosphate)lysine.

Belongs to the SHMT family. Homodimer. Requires pyridoxal 5'-phosphate as cofactor.

Its subcellular location is the cytoplasm. It carries out the reaction (6R)-5,10-methylene-5,6,7,8-tetrahydrofolate + glycine + H2O = (6S)-5,6,7,8-tetrahydrofolate + L-serine. The protein operates within one-carbon metabolism; tetrahydrofolate interconversion. It functions in the pathway amino-acid biosynthesis; glycine biosynthesis; glycine from L-serine: step 1/1. Its function is as follows. Catalyzes the reversible interconversion of serine and glycine with tetrahydrofolate (THF) serving as the one-carbon carrier. This reaction serves as the major source of one-carbon groups required for the biosynthesis of purines, thymidylate, methionine, and other important biomolecules. Also exhibits THF-independent aldolase activity toward beta-hydroxyamino acids, producing glycine and aldehydes, via a retro-aldol mechanism. The protein is Serine hydroxymethyltransferase of Gluconobacter oxydans (strain 621H) (Gluconobacter suboxydans).